A 122-amino-acid polypeptide reads, in one-letter code: Small ribosomal subunit protein bS6 (122 aa).

The disordered stretch occupies residues Ala95–Ala122.

It belongs to the bacterial ribosomal protein bS6 family.

Functionally, binds together with bS18 to 16S ribosomal RNA. This Ralstonia nicotianae (strain ATCC BAA-1114 / GMI1000) (Ralstonia solanacearum) protein is Small ribosomal subunit protein bS6.